The chain runs to 491 residues: METSYREEEARRKASLLHCIFFFLLGALAMAAAIAVLHESSYWEWRCNRLTDIVVDGDDGDGPSSSEVVDGGGEWGMVRTRGAQFVVGGGRPFYVNGFNTYWLMVLAVDPSTRGKVTEVFRQAAAVGLTVCRTWAFNDGGWRALQKSPGVYDEEVFKALDFVVSEARKHKIRLILPLINNWDDYGGKAQYVRWAQAAAAGAGADAFFSDETVRGYFKSHVTAVLTRVNAYTGVAYRDDPTIMAWELMNEPRCASDPTGDTLQAWIAEMAFHVKSVDPAHLLGVGAEGFYGPSSPPARLRVNPNADVALAGADFVRNHRVLGVDFASVHVYPDTWLPAGATKEAQLRFATSWVEAHIADAEGALGGMPVLFAEFGVSTRGARAAFNATSRDAFIEAVYGAMLRSTRRGGGGAGALLWQVFPEGTDYMDDGYAVVLPRAAATAGIVAAHSRRLQSFNSRCAWSCRWGCNKRDNDTAETTTAEADVDVSFHHEL.

The first 31 residues, 1-31 (METSYREEEARRKASLLHCIFFFLLGALAMA), serve as a signal peptide directing secretion. Trp-134 and Asn-248 together coordinate substrate. Glu-249 (proton donor) is an active-site residue. Position 330 (Tyr-330) interacts with substrate. The active-site Nucleophile is the Glu-372. N-linked (GlcNAc...) asparagine glycosylation is present at Asn-385. Substrate is bound at residue Trp-416. Asn-471 carries an N-linked (GlcNAc...) asparagine glycan.

The protein belongs to the glycosyl hydrolase 5 (cellulase A) family. As to expression, expression not detected.

Its subcellular location is the secreted. It carries out the reaction Random hydrolysis of (1-&gt;4)-beta-D-mannosidic linkages in mannans, galactomannans and glucomannans.. This chain is Putative mannan endo-1,4-beta-mannosidase 5 (MAN5), found in Oryza sativa subsp. japonica (Rice).